A 400-amino-acid chain; its full sequence is uncharacterized protein (400 aa).

Residues 112–126 show a composition bias toward basic and acidic residues; sequence SESTAQIEKKPRKPL. The interval 112 to 151 is disordered; that stretch reads SESTAQIEKKPRKPLDSVGLLEGDRNKRKKSPQMNDFNIK.

This is an uncharacterized protein from Homo sapiens (Human).